Consider the following 526-residue polypeptide: Microphthalmia-associated transcription factor (526 aa).

Phosphoserine; by MTOR is present on serine 5. Disordered stretches follow at residues 20–54 and 155–179; these read EPKTYYELKSQPLKSSSSAEHSGASKPPLSSSTMT and VLSSPCPNQPGDHAMPPVPGSSAPN. The span at 34–44 shows a compositional bias: low complexity; the sequence is SSSSAEHSGAS. At serine 180 the chain carries Phosphoserine; by MAPK. The segment at 224–291 is transactivation; sequence DDVIDDIISL…PANLPNIKRE (68 aa). Serine 280 is modified (phosphoserine). Lysine 289 participates in a covalent cross-link: Glycyl lysine isopeptide (Lys-Gly) (interchain with G-Cter in SUMO). Positions 311 to 364 constitute a bHLH domain; it reads QKKDNHNLIERRRRFNINDRIKELGTLIPKSNDPDMRWNKGTILKASVDYIRKL. Positions 355-401 form a coiled coil; the sequence is KASVDYIRKLQREQQRAKDLENRQKKLEHANRHLLLRVQELEMQARA. The interval 374–395 is leucine-zipper; the sequence is LENRQKKLEHANRHLLLRVQEL. Residues 401-431 are DNA-binding regulation; sequence AHGLSLIPSTGLCSPDLVNRIIKQEPVLENC. Serine 405 is modified (phosphoserine; by GSK3). Serine 414 carries the post-translational modification Phosphoserine. Lysine 423 is covalently cross-linked (Glycyl lysine isopeptide (Lys-Gly) (interchain with G-Cter in SUMO)). Residue serine 491 is modified to Phosphoserine. The disordered stretch occupies residues 496–526; the sequence is TDPLLSSVSPGASKTSSRRSSMSAEETEHAC. Residues 507 to 519 show a composition bias toward low complexity; that stretch reads ASKTSSRRSSMSA. At serine 516 the chain carries Phosphoserine; by RPS6KA1.

Belongs to the MiT/TFE family. As to quaternary structure, homodimer or heterodimer; dimerization is mediated via the coiled coil region. Efficient DNA binding requires dimerization with another bHLH protein. Binds DNA in the form of homodimer or heterodimer with either TFE3, TFEB or TFEC. Interacts with small GTPases Rag (RagA/RRAGA, RagB/RRAGB, RagC/RRAGC and/or RagD/RRAGD); promoting its recruitment to lysosomal membrane in the presence of nutrients. Interacts with KARS1. Identified in a complex with HINT1 and CTNNB1. Interacts with VSX2. When nutrients are present, phosphorylation by MTOR at Ser-5 via non-canonical mTORC1 pathway promotes ubiquitination by the SCF(BTRC) complex, followed by degradation. Phosphorylation at Ser-405 significantly enhances the ability to bind the tyrosinase promoter. Phosphorylation by MARK3/cTAK1 at Ser-280 promotes association with 14-3-3/YWHA adapters and retention in the cytosol. Phosphorylated at Ser-180 and Ser-516 following KIT signaling, triggering a short live activation: Phosphorylation at Ser-180 and Ser-516 by MAPK and RPS6KA1, respectively, activate the transcription factor activity but also promote ubiquitination and subsequent degradation by the proteasome. Phosphorylated in response to blue light (415nm). In terms of processing, ubiquitinated by the SCF(BTRC) and SCF(FBXW11) complexes following phosphorylation ar Ser-5 by MTOR, leading to its degradation by the proteasome. Ubiquitinated following phosphorylation at Ser-180, leading to subsequent degradation by the proteasome. Deubiquitinated by USP13, preventing its degradation. In terms of tissue distribution, in the adult, expressed at high levels in the heart, skin, skeletal muscle, intestine, stomach, kidney, ovary, lung, spleen and brain. In the embryo, expressed in developing eye, ear, skin and heart. Isoform M is expressed in melanocytes and also in the embryonic and adult heart while isoform A and isoform H are more widely expressed.

It localises to the nucleus. The protein resides in the cytoplasm. It is found in the lysosome membrane. Functionally, transcription factor that acts as a master regulator of melanocyte survival and differentiation as well as melanosome biogenesis. Binds to M-boxes (5'-TCATGTG-3') and symmetrical DNA sequences (E-boxes) (5'-CACGTG-3') found in the promoter of pigmentation genes, such as tyrosinase (TYR). Involved in the cellular response to amino acid availability by acting downstream of MTOR: in the presence of nutrients, MITF phosphorylation by MTOR promotes its inactivation. Upon starvation or lysosomal stress, inhibition of MTOR induces MITF dephosphorylation, resulting in transcription factor activity. Plays an important role in melanocyte development by regulating the expression of tyrosinase (TYR) and tyrosinase-related protein 1 (TYRP1). Plays a critical role in the differentiation of various cell types, such as neural crest-derived melanocytes, mast cells, osteoclasts and optic cup-derived retinal pigment epithelium. This chain is Microphthalmia-associated transcription factor (Mitf), found in Mus musculus (Mouse).